The chain runs to 538 residues: tRNA-2-methylthio-N(6)-dimethylallyladenosine synthase (538 aa).

Residues Met-1–Ser-23 form a disordered region. The MTTase N-terminal domain occupies Lys-95–Phe-213. [4Fe-4S] cluster-binding residues include Cys-104, Cys-140, Cys-174, Cys-250, Cys-254, and Cys-257. The 231-residue stretch at Arg-236 to Gln-466 folds into the Radical SAM core domain. In terms of domain architecture, TRAM spans Leu-469–Glu-532.

It belongs to the methylthiotransferase family. MiaB subfamily. Monomer. Requires [4Fe-4S] cluster as cofactor.

The protein localises to the cytoplasm. The enzyme catalyses N(6)-dimethylallyladenosine(37) in tRNA + (sulfur carrier)-SH + AH2 + 2 S-adenosyl-L-methionine = 2-methylsulfanyl-N(6)-dimethylallyladenosine(37) in tRNA + (sulfur carrier)-H + 5'-deoxyadenosine + L-methionine + A + S-adenosyl-L-homocysteine + 2 H(+). Catalyzes the methylthiolation of N6-(dimethylallyl)adenosine (i(6)A), leading to the formation of 2-methylthio-N6-(dimethylallyl)adenosine (ms(2)i(6)A) at position 37 in tRNAs that read codons beginning with uridine. The protein is tRNA-2-methylthio-N(6)-dimethylallyladenosine synthase of Halalkalibacterium halodurans (strain ATCC BAA-125 / DSM 18197 / FERM 7344 / JCM 9153 / C-125) (Bacillus halodurans).